Here is a 100-residue protein sequence, read N- to C-terminus: Large ribosomal subunit protein uL23 (100 aa).

It belongs to the universal ribosomal protein uL23 family. As to quaternary structure, part of the 50S ribosomal subunit. Contacts protein L29, and trigger factor when it is bound to the ribosome.

In terms of biological role, one of the early assembly proteins it binds 23S rRNA. One of the proteins that surrounds the polypeptide exit tunnel on the outside of the ribosome. Forms the main docking site for trigger factor binding to the ribosome. This chain is Large ribosomal subunit protein uL23, found in Shigella dysenteriae serotype 1 (strain Sd197).